Here is a 494-residue protein sequence, read N- to C-terminus: MSELIKLDAATLADKISSKEVSSAEVTQAFLDQIAATDGDYHAFLHVGAEQALAAAQTVDRAVAAGEHLPSPLAGVPLALKDVFTTTDMPTTCGSKVLEGWTSPYDATVTAKLRSAGIPILGKTNMDEFAMGSSTENSAYGPTRNPWDTERVPGGSGGGSAAALAAFQAPLAIGTDTGGSIRQPAALTATVGVKPTYGTVSRYGLVACASSLDQGGPCARTVLDTALLHQVIAGHDPLDSTSVEAPVPDVVAAARTGAGGDLTGVRIGVVKQLRSGEGYQAGVLASFNAAVDQLTALGAEVTEVDCPHFDYSLPAYYLILPSEVSSNLAKFDGMRYGLRAGDDGTHSAEEVMALTRAAGFGPEVKRRIMIGAYALSAGYYDAYYNQAQKVRTLIARDLDAAYQKVDVLVSPATPTTAFRLGEKVDDPLSMYLFDLCTLPLNLAGHCGMSVPSGLSADDNLPVGLQIMAPALADDRLYRVGAAYEAARGPLPTAL.

Residues Lys81 and Ser156 each act as charge relay system in the active site. The active-site Acyl-ester intermediate is the Ser180.

This sequence belongs to the amidase family. GatA subfamily. As to quaternary structure, heterotrimer of A, B and C subunits.

It catalyses the reaction L-glutamyl-tRNA(Gln) + L-glutamine + ATP + H2O = L-glutaminyl-tRNA(Gln) + L-glutamate + ADP + phosphate + H(+). Its function is as follows. Allows the formation of correctly charged Gln-tRNA(Gln) through the transamidation of misacylated Glu-tRNA(Gln) in organisms which lack glutaminyl-tRNA synthetase. The reaction takes place in the presence of glutamine and ATP through an activated gamma-phospho-Glu-tRNA(Gln). The protein is Glutamyl-tRNA(Gln) amidotransferase subunit A of Mycolicibacterium gilvum (strain PYR-GCK) (Mycobacterium gilvum (strain PYR-GCK)).